Reading from the N-terminus, the 457-residue chain is Variant surface glycoprotein 20 (457 aa).

The signal sequence occupies residues 1–20 (MFTQAVIALIGLVSIRTGKT). A compositionally biased stretch (polar residues) spans 385–397 (RQTASGDDQSAEN). Positions 385-406 (RQTASGDDQSAENQCGGKKEDE) are disordered. Residue Asn436 is glycosylated (N-linked (GlcNAc...) asparagine). The GPI-anchor amidated serine moiety is linked to residue Ser440. Positions 441 to 457 (NSFVIKKAPLWLAFLLF) are cleaved as a propeptide — removed in mature form.

The protein resides in the cell membrane. VSG forms a coat on the surface of the parasite. The trypanosome evades the immune response of the host by expressing a series of antigenically distinct VSGs from an estimated 1000 VSG genes. The sequence is that of Variant surface glycoprotein 20 from Trypanosoma equiperdum.